A 335-amino-acid chain; its full sequence is Ubiquinone biosynthesis protein COQ4, mitochondrial (335 aa).

A mitochondrion-targeting transit peptide spans 1-10; that stretch reads MLRLSLLRST. His-210, Asp-211, His-214, and Glu-226 together coordinate Zn(2+).

Belongs to the COQ4 family. In terms of assembly, component of a multi-subunit COQ enzyme complex, composed of at least COQ3, COQ4, COQ5, COQ6, COQ7 and COQ9. Interacts with COQ3. Requires Zn(2+) as cofactor.

It localises to the mitochondrion inner membrane. The catalysed reaction is 4-hydroxy-3-methoxy-5-(all-trans-hexaprenyl)benzoate + H(+) = 2-methoxy-6-(all-trans-hexaprenyl)phenol + CO2. The protein operates within cofactor biosynthesis; ubiquinone biosynthesis. Its function is as follows. Lyase that catalyzes the C1-decarboxylation of 4-hydroxy-3-methoxy-5-(all-trans-hexaprenyl)benzoic acid into 2-methoxy-6-(all-trans-hexaprenyl)phenol during ubiquinone biosynthesis. This is Ubiquinone biosynthesis protein COQ4, mitochondrial from Saccharomyces cerevisiae (strain AWRI1631) (Baker's yeast).